Consider the following 474-residue polypeptide: Cysteine--tRNA ligase (474 aa).

A Zn(2+)-binding site is contributed by Cys30. The short motif at 32–42 (PTVYNYAHIGN) is the 'HIGH' region element. Cys215, His240, and Glu244 together coordinate Zn(2+). The 'KMSKS' region motif lies at 272-276 (KMSKS). Lys275 lines the ATP pocket.

The protein belongs to the class-I aminoacyl-tRNA synthetase family. As to quaternary structure, monomer. Zn(2+) is required as a cofactor.

Its subcellular location is the cytoplasm. It carries out the reaction tRNA(Cys) + L-cysteine + ATP = L-cysteinyl-tRNA(Cys) + AMP + diphosphate. In Brachyspira hyodysenteriae (strain ATCC 49526 / WA1), this protein is Cysteine--tRNA ligase.